The chain runs to 415 residues: MLQKTVLLLALVAQVLMLENGLLRTPPMGWLAWERFRCNIDCVEDPKNCISERLFMEMADRLAQDGWRDLGYVYLNIDDCWIGGRDASGRLIPDPKRFPHGIAFLADYAHSLGLKLGIYEDMGKMTCMGYPGTTLDKVELDAETFAEWKVDMLKLDGCFSSSRERAEGYPKMAAALNATGRPIAFSCSWPAYEGGLPPKVNYTEVSRVCNLWRNYKDIQDSWKSVLSILDWFVRHQDVLQPVAGPGHWNDPDMLLIGNFGLSFDESRAQMALWTVLAAPLLMSTDLRTISPQNMDILQNPLMIKINQDPLGIQGRRILKSKSHIEVFKRYLSNQASALVFFSRRTDMPFRFHCSLLELNYPKGRVYEGQNVFTGDIFSGLQTEVNFTVIINPSGVVMWYLYPIKDLGISTMMSHW.

Residues 1-17 (MLQKTVLLLALVAQVLM) form the signal peptide. 3 disulfide bridges follow: cysteine 38–cysteine 80, cysteine 42–cysteine 49, and cysteine 127–cysteine 158. Substrate is bound by residues 78–79 (DD) and lysine 154. The active-site Nucleophile is the aspartate 156. Asparagine 177 is a glycosylation site (N-linked (GlcNAc...) asparagine). The cysteines at positions 187 and 209 are disulfide-linked. Serine 188 is a binding site for substrate. A glycan (N-linked (GlcNAc...) asparagine) is linked at asparagine 201. Positions 213 and 217 each coordinate substrate. The active-site Proton donor is the aspartate 217. Phosphoserine is present on residues serine 322 and serine 332. Residue asparagine 385 is glycosylated (N-linked (GlcNAc...) asparagine).

This sequence belongs to the glycosyl hydrolase 27 family. In terms of assembly, homodimer.

The protein localises to the lysosome. It carries out the reaction Cleavage of non-reducing alpha-(1-&gt;3)-N-acetylgalactosamine residues from human blood group A and AB mucin glycoproteins, Forssman hapten and blood group A lacto series glycolipids.. The enzyme catalyses a neolactoside IV(3)-alpha-GalNAc,IV(2)-alpha-Fuc-nLc4Cer(d18:1(4E)) + H2O = a neolactoside IV(2)-alpha-Fuc-nLc4Cer(d18:1(4E)) + N-acetyl-alpha-D-galactosamine. It catalyses the reaction a neolactoside IV(3)-alpha-GalNAc,IV(2)-alpha-Fuc-nLc4Cer(d18:0) + H2O = a neolactoside IV(2)-alpha-Fuc-nLc4Cer(d18:0) + N-acetyl-alpha-D-galactosamine. The catalysed reaction is a globoside IV3GalNAc-Gb4Cer + H2O = N-acetyl-alpha-D-galactosamine + a globoside Gb4Cer. Functionally, removes terminal alpha-N-acetylgalactosamine residues from glycolipids and glycopeptides. Required for the breakdown of glycolipids. This Mus musculus (Mouse) protein is Alpha-N-acetylgalactosaminidase (Naga).